The primary structure comprises 1221 residues: METQPEVPEVPLRPFKLAHQVVSLTGISFERRSIIGVVELTIVPNSENLRLIRLNAKQLRIYSVVLNDVCQADFTYFDPFQNICYKEHKSRALEVYSKHHLTAAQYTDPDVNNGELLIQVPPEGYSMIQEGQGLRIRIEFSLENPKCGVHFVIPPASTDEETQMNSSHMFTNCYENSSRLWFPCVDSFADPCTWRLEFTVDKNMTAVSCGELLEVIMTPDLRKKTFHYSVSTPVCAPNIALAVGQFEIYVDPHMHEVTHFCLPGLLPLLKNTVRYLHEAFEFYEETLSTRYPFSCYKQVFVDELDTDISAYATMSIASVNLLHSIAIIDQTYISRTFMSRAVAEQFFGCFITSHHWSDTWLAKGIAEYLCGLYSRKCFGNNEYRAWVQSELARVVRYEEQYGGIILDCSQPPAPLPVSGTNQSAASSKQQEIVHYFPIKSLHTVSPKYVEAMRRKAHFVIRMLENRIGQELLIQVFNKQLALASSAATTKIGAGLWSQLLISTNIFIKAIFTVTGKDMSVFMDQWVRTGGHAKFSLTSVFNRKRNTIELEIRQDYVNQRGIRKYNGPLMVQLQELDGTFKHTLQIESTLVKSDITCHSKSRRNKKKKIPLCTGEEVDMDLSAMDDSPVLWIRLDPEMILLRDLIIEQPDFQWQYQLRHERDVTAQFQAIQALQKYPTNATRLALTDTIESERCFYQVRCEAAHSLTKVANQMVASWSGPPAMLNIFRKFFGSFSAPHIIKLNNFSNFQLYFLQKAIPVAMAGLRTSHGICPPEVMRFLFDLFKYNENSRNHYTDAYYRAALVEALGETLTPVVSVAIHGTQITTDSLSTDAKLVLDEVTRLLNMEKHLPSYKYMVSVSCLKVIRKLQKFGHLPSLPHIYRSYAEYGIYLDLRIAAMECLVDFVKVDGRSEDLEHLITLLETDPDPAARHALAQLLIDNPPFTRESRSRLDKPNLVDRLWFSINRLPYDTKLRCDIVDLYYALYGTKRPNCLQAGENQSFYKDLMKDNNSSVGSVTGSFKKTSDSKSHLPTPTNTLDNEPQERQKPAMVTIKRTATEAFEVGDEIIKLERSEEITVLDEPVNVQAYDSETKVNALQADEEARDTHQAAKRLKNEMYAEDDNSSTMLDVGDSTRYESSHEEGKLKSGDGGLKKKKKKEKKKHKHKHKHRHSKDKDKDKDKERKDKDKRDPHISRLQARETATPDTLSSEDSSNSNSLPPMNLN.

The segment at 845 to 1213 (EKHLPSYKYM…LSSEDSSNSN (369 aa)) is binds to Tbp and Taf1. Disordered regions lie at residues 1011 to 1044 (VGSV…ERQK) and 1111 to 1221 (KNEM…MNLN). Residues 1027 to 1037 (HLPTPTNTLDN) are compositionally biased toward polar residues. The segment covering 1129–1144 (DSTRYESSHEEGKLKS) has biased composition (basic and acidic residues). Residues S1135 and S1136 each carry the phosphoserine modification. A highly charged region spans residues 1138-1183 (EEGKLKSGDGGLKKKKKKEKKKHKHKHKHRHSKDKDKDKDKERKDK). Residues 1150 to 1169 (KKKKKKEKKKHKHKHKHRHS) show a composition bias toward basic residues. Basic and acidic residues predominate over residues 1170-1190 (KDKDKDKDKERKDKDKRDPHI). Residues 1206–1221 (SEDSSNSNSLPPMNLN) are compositionally biased toward low complexity.

It belongs to the TAF2 family. In terms of assembly, belongs to the TFIID complex which is composed of TATA binding protein (Tbp) and a number of TBP-associated factors (TAFs). Interacts with Tbp, Taf1, Taf11 and Taf12.

The protein localises to the nucleus. TFIID is a multimeric protein complex that plays a central role in mediating promoter responses to various activators and repressors. An essential subunit binds to core promoter DNA. This is Transcription initiation factor TFIID subunit 2 (Taf2) from Drosophila melanogaster (Fruit fly).